Reading from the N-terminus, the 118-residue chain is Holo-[acyl-carrier-protein] synthase (118 aa).

Residues D8 and E58 each coordinate Mg(2+).

This sequence belongs to the P-Pant transferase superfamily. AcpS family. Requires Mg(2+) as cofactor.

The protein localises to the cytoplasm. The catalysed reaction is apo-[ACP] + CoA = holo-[ACP] + adenosine 3',5'-bisphosphate + H(+). In terms of biological role, transfers the 4'-phosphopantetheine moiety from coenzyme A to a Ser of acyl-carrier-protein. The polypeptide is Holo-[acyl-carrier-protein] synthase (Streptococcus uberis (strain ATCC BAA-854 / 0140J)).